The chain runs to 1052 residues: RTX-III toxin determinant A from serotype 8 (1052 aa).

Helical transmembrane passes span 248–265, 275–334, and 372–418; these read GLDIISSLLSGVTASFAL, KVAA…LRVA, and DASI…GILE. Hemolysin-type calcium-binding repeat units follow at residues 744–761, 762–779, 780–797, 798–815, 826–843, and 844–861; these read KGSKFRDIFHGADGDDLL, NGNDGDDILYGDKGNDEL, RGDNGNDQLYGGEGNDKL, LGGNGNNYLSGGDGNDEL, RGGKGDDKLYGSSGSDLL, and DGGEGNDYLEGGDGSDFY.

Belongs to the RTX prokaryotic toxin (TC 1.C.11) family. Post-translationally, palmitoylated by ApxIIIC. The toxin only becomes active when modified.

It localises to the secreted. The protein resides in the host cell membrane. In terms of biological role, does not have hemolytic activity but shows a strong cytotoxicity towards alveolar macrophages and neutrophils. This Actinobacillus pleuropneumoniae (Haemophilus pleuropneumoniae) protein is RTX-III toxin determinant A from serotype 8 (apxIIIA).